A 313-amino-acid chain; its full sequence is Protein OPG185 (313 aa).

The first 16 residues, 1–16 (MTRLSILLLLISLVYS), serve as a signal peptide directing secretion. The Virion surface segment spans residues 17–277 (TPYPQTQISK…GKYSTKDYVK (261 aa)). The Ig-like V-type domain occupies 18 to 121 (PYPQTQISKK…TTNDTDKVDY (104 aa)). C36 and C105 form a disulfide bridge. N71, N114, N163, N182, and N262 each carry an N-linked (GlcNAc...) asparagine; by host glycan. A helical membrane pass occupies residues 278 to 301 (VFGIAALIILSAVAIFCITYYICN). Residues 302–313 (KRSRKYKTENKV) lie on the Intravirion side of the membrane.

The protein belongs to the orthopoxvirus OPG185 family. As to quaternary structure, heterodimerizes with OPG040. The heterodimer OPG185-OPG040 interacts with components of the entry fusion complex OPG143 and OPG094. Heterodimer with C3/VPC protein; disulfide-linked. In terms of processing, glycosylated; contains phosphate and sulfate-substituted glycans. O-glycosylation is required for hemagglutination and hemadsorption activities of infected cell membranes.

Its subcellular location is the virion membrane. It is found in the host membrane. Functionally, prevents cell to cell fusion by interacting with and directing the viral OPG040 protein on the host plasma membrane. The OPG185-OPG040 complex associates with components of the entry fusion complex (EFC) presumably to avoid superinfection and syncytium formation. Via its interaction with C3/VCP protein, protects the infected cell and probably also the extracellular enveloped virus from complement attack. The protein is Protein OPG185 (OPG185) of Homo sapiens (Human).